The primary structure comprises 374 residues: Anhydro-N-acetylmuramic acid kinase (374 aa).

Residue 12-19 (GTSLDGVD) coordinates ATP.

This sequence belongs to the anhydro-N-acetylmuramic acid kinase family.

The catalysed reaction is 1,6-anhydro-N-acetyl-beta-muramate + ATP + H2O = N-acetyl-D-muramate 6-phosphate + ADP + H(+). The protein operates within amino-sugar metabolism; 1,6-anhydro-N-acetylmuramate degradation. It functions in the pathway cell wall biogenesis; peptidoglycan recycling. Functionally, catalyzes the specific phosphorylation of 1,6-anhydro-N-acetylmuramic acid (anhMurNAc) with the simultaneous cleavage of the 1,6-anhydro ring, generating MurNAc-6-P. Is required for the utilization of anhMurNAc either imported from the medium or derived from its own cell wall murein, and thus plays a role in cell wall recycling. In Enterobacter sp. (strain 638), this protein is Anhydro-N-acetylmuramic acid kinase.